A 1029-amino-acid polypeptide reads, in one-letter code: MGLWGKKGTVAPHDQSPRRRPKKGLIKKKMVKREKQKRNMEELKKEVVMDDHKLTLEELSTKYSVDLTKGHSHQRAKEILTRGGPNTVTPPPTTPEWVKFCKQLFGGFSLLLWTGAILCFVAYSIQIYFNEEPTKDNLYLSIVLSVVVIVTGCFSYYQEAKSSKIMESFKNMVPQQALVIRGGEKMQINVQEVVLGDLVEIKGGDRVPADLRLISAQGCKVDNSSLTGESEPQSRSPDFTHENPLETRNICFFSTNCVEGTARGIVIATGDSTVMGRIASLTSGLAVGQTPIAAEIEHFIHLITVVAVFLGVTFFALSLLLGYGWLEAIIFLIGIIVANVPEGLLATVTVCLTLTAKRMARKNCLVKNLEAVETLGSTSTICSDKTGTLTQNRMTVAHMWFDMTVYEADTTEEQTGKTFTKSSDTWFMLARIAGLCNRADFKANQEILPIAKRATTGDASESALLKFIEQSYSSVAEMREKNPKVAEIPFNSTNKYQMSIHLREDSSQTHVLMMKGAPERILEFCSTFLLNGQEYSMNDEMKEAFQNAYLELGGLGERVLGFCFLNLPSSFSKGFPFNTDEINFPMDNLCFVGLISMIDPPRAAVPDAVSKCRSAGIKVIMVTGDHPITAKAIAKGVGIISEGTETAEEVAARLKIPISKVDASAAKAIVVHGAELKDIQSKQLDQILQNHPEIVFARTSPQQKLIIVEGCQRLGAVVAVTGDGVNDSPALKKADIGIAMGISGSDVSKQAADMILLDDNFASIVTGVEEGRLIFDNLKKSIMYTLTSNIPEITPFLMFIILGIPLPLGTITILCIDLGTDMVPAISLAYESAESDIMKRLPRNPKTDNLVNHRLIGMAYGQIGMIQALAGFFTYFVILAENGFRPVDLLGIRLHWEDKYLNDLEDSYGQQWTYEQRKVVEFTCQTAFFVTIVVVQWADLIISKTRRNSLFQQGMRNKVLIFGILEETLLAAFLSYTPGMDVALRMYPLKITWWLCAIPYSILIFVYDEIRKLLIRQHPDGWVERETYY.

The segment at 1–37 (MGLWGKKGTVAPHDQSPRRRPKKGLIKKKMVKREKQK) is disordered. Over 1–95 (MGLWGKKGTV…NTVTPPPTTP (95 aa)) the chain is Cytoplasmic. The segment covering 18–36 (RRRPKKGLIKKKMVKREKQ) has biased composition (basic residues). The segment at 90–92 (PPP) is interaction with phosphoinositide-3 kinase. A helical transmembrane segment spans residues 96 to 116 (EWVKFCKQLFGGFSLLLWTGA). Residues 117–139 (ILCFVAYSIQIYFNEEPTKDNLY) are Extracellular-facing. The chain crosses the membrane as a helical span at residues 140–160 (LSIVLSVVVIVTGCFSYYQEA). Residues 161 to 296 (KSSKIMESFK…VGQTPIAAEI (136 aa)) are Cytoplasmic-facing. Residues 223–237 (NSSLTGESEPQSRSP) show a composition bias toward polar residues. The interval 223 to 242 (NSSLTGESEPQSRSPDFTHE) is disordered. Residues 297-316 (EHFIHLITVVAVFLGVTFFA) form a helical membrane-spanning segment. At 317–328 (LSLLLGYGWLEA) the chain is on the extracellular side. A helical membrane pass occupies residues 329–346 (IIFLIGIIVANVPEGLLA). The Cytoplasmic portion of the chain corresponds to 347 to 778 (TVTVCLTLTA…EEGRLIFDNL (432 aa)). Catalysis depends on Asp384, which acts as the 4-aspartylphosphate intermediate. Positions 723 and 727 each coordinate Mg(2+). The chain crosses the membrane as a helical span at residues 779-798 (KKSIMYTLTSNIPEITPFLM). Residues 799–808 (FIILGIPLPL) are Extracellular-facing. The chain crosses the membrane as a helical span at residues 809–829 (GTITILCIDLGTDMVPAISLA). Topologically, residues 830–849 (YESAESDIMKRLPRNPKTDN) are cytoplasmic. Residues 850 to 872 (LVNHRLIGMAYGQIGMIQALAGF) form a helical membrane-spanning segment. Residues 873–924 (FTYFVILAENGFRPVDLLGIRLHWEDKYLNDLEDSYGQQWTYEQRKVVEFTC) are Extracellular-facing. A helical transmembrane segment spans residues 925–944 (QTAFFVTIVVVQWADLIISK). The Cytoplasmic portion of the chain corresponds to 945 to 957 (TRRNSLFQQGMRN). Ser949 bears the Phosphoserine; by PKA mark. The helical transmembrane segment at 958-976 (KVLIFGILEETLLAAFLSY) threads the bilayer. The Extracellular segment spans residues 977-991 (TPGMDVALRMYPLKI). Residues 992–1012 (TWWLCAIPYSILIFVYDEIRK) form a helical membrane-spanning segment. At 1013-1029 (LLIRQHPDGWVERETYY) the chain is on the cytoplasmic side.

It belongs to the cation transport ATPase (P-type) (TC 3.A.3) family. Type IIC subfamily. In terms of assembly, the sodium/potassium-transporting ATPase is composed of a catalytic alpha subunit, an auxiliary non-catalytic beta subunit and an additional regulatory subunit. As to expression, specifically expressed in testis. Found in very low levels in skeletal muscle. Expressed in mature sperm (at protein level).

It is found in the cell membrane. It catalyses the reaction K(+)(out) + Na(+)(in) + ATP + H2O = K(+)(in) + Na(+)(out) + ADP + phosphate + H(+). Specifically inhibited by an endogenous cardiac glycoside, ouabain. Functionally, this is the catalytic component of the active enzyme, which catalyzes the hydrolysis of ATP coupled with the exchange of sodium and potassium ions across the plasma membrane. This action creates the electrochemical gradient of sodium and potassium ions, providing the energy for active transport of various nutrients. Plays a role in sperm motility. In Homo sapiens (Human), this protein is Sodium/potassium-transporting ATPase subunit alpha-4.